Reading from the N-terminus, the 492-residue chain is Ribulose bisphosphate carboxylase large chain (492 aa).

N131 and T181 together coordinate substrate. The Proton acceptor role is filled by K183. K185 contacts substrate. Residues K209, D211, and E212 each contribute to the Mg(2+) site. K209 is subject to N6-carboxylysine. Residue H301 is the Proton acceptor of the active site. R302, H334, and S386 together coordinate substrate.

It belongs to the RuBisCO large chain family. Type I subfamily. As to quaternary structure, heterohexadecamer of 8 large chains and 8 small chains. Mg(2+) is required as a cofactor.

It carries out the reaction 2 (2R)-3-phosphoglycerate + 2 H(+) = D-ribulose 1,5-bisphosphate + CO2 + H2O. It catalyses the reaction D-ribulose 1,5-bisphosphate + O2 = 2-phosphoglycolate + (2R)-3-phosphoglycerate + 2 H(+). Its function is as follows. RuBisCO catalyzes two reactions: the carboxylation of D-ribulose 1,5-bisphosphate, the primary event in carbon dioxide fixation, as well as the oxidative fragmentation of the pentose substrate. Both reactions occur simultaneously and in competition at the same active site. This Nitrosococcus oceani (strain ATCC 19707 / BCRC 17464 / JCM 30415 / NCIMB 11848 / C-107) protein is Ribulose bisphosphate carboxylase large chain.